Here is a 221-residue protein sequence, read N- to C-terminus: RNA pyrophosphohydrolase (221 aa).

One can recognise a Nudix hydrolase domain in the interval 6–149 (GFRPNVGIVL…KRSVYALALT (144 aa)). A Nudix box motif is present at residues 38–59 (GGIDRGETPEQAMFRELHEEVG).

It belongs to the Nudix hydrolase family. RppH subfamily. A divalent metal cation serves as cofactor.

Functionally, accelerates the degradation of transcripts by removing pyrophosphate from the 5'-end of triphosphorylated RNA, leading to a more labile monophosphorylated state that can stimulate subsequent ribonuclease cleavage. The protein is RNA pyrophosphohydrolase of Verminephrobacter eiseniae (strain EF01-2).